Consider the following 268-residue polypeptide: MEPRLLMLGFLSLTIVPSCRAELCLYDPPEVPNATFKALSYKNGTILNCECKRGFRRLKELVYMRCLGNSWSSNCQCTSNSHDKSRKQVTAQLEHQKEQQTTTDMQKPTQSMHQENLTGHCREPPPWKHEDSKRIYHFVEGQSVHYECIPGYKALQRGPAISICKMKCGKTGWTQPQLTCVDEREHHRFLASEESQGSRNSSPESETSCPITTTDFPQPTETTAMTETFVLTMEYKVAVASCLFLLISILLLSGLTWQHRWRKSRRTI.

The first 21 residues, 1–21 (MEPRLLMLGFLSLTIVPSCRA), serve as a signal peptide directing secretion. The Sushi 1 domain maps to 22–79 (ELCLYDPPEVPNATFKALSYKNGTILNCECKRGFRRLKELVYMRCLGNSWSSNCQCTS). Topologically, residues 22 to 236 (ELCLYDPPEV…ETFVLTMEYK (215 aa)) are extracellular. Intrachain disulfides connect C24-C66, C49-C75, and C51-C77. N-linked (GlcNAc...) asparagine glycosylation is found at N33 and N43. The segment at 86–109 (RKQVTAQLEHQKEQQTTTDMQKPT) is disordered. A compositionally biased stretch (polar residues) spans 88-109 (QVTAQLEHQKEQQTTTDMQKPT). The N-linked (GlcNAc...) asparagine glycan is linked to N116. Residues 119 to 182 (GHCREPPPWK…WTQPQLTCVD (64 aa)) enclose the Sushi 2 domain. 2 cysteine pairs are disulfide-bonded: C121–C164 and C148–C180. The disordered stretch occupies residues 189 to 219 (FLASEESQGSRNSSPESETSCPITTTDFPQP). The span at 193 to 211 (EESQGSRNSSPESETSCPI) shows a compositional bias: polar residues. A helical transmembrane segment spans residues 237–257 (VAVASCLFLLISILLLSGLTW). Residues 258 to 268 (QHRWRKSRRTI) are Cytoplasmic-facing.

As to quaternary structure, non-covalent dimer of an alpha and a beta subunit. IL2R exists in 3 different forms: a high affinity dimer, an intermediate affinity monomer (beta subunit), and a low affinity monomer (alpha subunit). The high and intermediate affinity forms also associate with a gamma subunit.

The protein localises to the membrane. Functionally, receptor for interleukin-2. The receptor is involved in the regulation of immune tolerance by controlling regulatory T cells (TREGs) activity. TREGs suppress the activation and expansion of autoreactive T-cells. The polypeptide is Interleukin-2 receptor subunit alpha (Il2ra) (Mus musculus (Mouse)).